We begin with the raw amino-acid sequence, 2704 residues long: MNNKFIIFSLLLALVASQTYSLTSCTCAQLLSEGDCIKNVSLGCSWDTTKKTCGVSTTPVTPTVTYAAYCDTFAETDCPKAKPCTDCGNYAACAWVESKCTFFTGCTPFAKTLDSECQAISNRCITDGTHCVEVDACSTYKKQLPCVKNAAGSLCYWDTTNNTCDKLPATFATDKDCRDVISTCTTKTGGGCVDSGNNCSDQTLEIQCVWNKLKTTSCYWDGAACKDRICDNAPTSLTTDDACKTFRTDGTCTTKANGGCVTRTTCAAATIQASCIKNSSGGDCYWTGTACVDKTCANAPTTMTTNSACAGFVTGCITKSGGGCVANGACSVANVQAACVKNSSNFDCIWDTTCKEKTCANAPTTNNTHDLCTSYLSTCTVKSGGGCQNRSCANAPTTMTTNDACEAYLTGNNCITKSGGGCVTNTTCAAITLEAACVKNSSGSTCFWDTASSSCKDKTCVNAPATNTTHDLCQAFLNTCTVNSTSAGCVEKTCENSLVLAICDKDTSSRACIWKGKCYKKQCVLASSATTTHADCQTYHSTCTLSNSGTGCVPLPLKCEAITIEAACNLKANGQPCGWNGSQCIDKACSTASKTFTTTSQCTGHISTCVANNPVTVNGSLTIQGCQDLPTSCAARKSSENCEIARVGFPTCLWVSSSTSCVEKSCATASTVGTTGALSAGGFTFSGCQTYLNTCISNNTADGCIAKPSSCSSLVSSNCRDGSKASGDCYWNGSSCVDKTCANITLTSHASCYSIFNQCTVNNGGTACQTLATACTSYSTQENCKFTSTNKNCVWTGLACRNATCADAPDTTAYDSDTECLAYPTPSETCTVVYKVGAQGCVSKSANCSDYMTSAQCHKTLTNLTANDDCKWIVDRCYALSSFATGACTTFKGNKTMCEGYRAGCTNTVGAASSASCTLDCTLKTGSGLTFADCQALDSTCSVKKDGTGCIVIQSTCAGYGSTATNCFRSSASGTAGYCAMNTNCQSVTSAAECAFVTGLTGLDHSKCQLYHSSCTSLKDGTGCQEYKTACSSYATGNTCANSVQGKCFDDATDCLRFANCASITGTGLTNTICVTYDPGCVANVNGTACQEKLATCAAYLTQNSCSTSTAGTCAWSGSACLTVVDANVATECAYITGTGLTNAICAGYNAKCTVNRAGTACQKKEALCATYAAVQATCSQSDAGLCAWSGSACLTVVDANVATECPYITGTGLTNAICAGYNAKCTVNRAGTACQKKEALCATYAAVQATCSQSDAGLCAWSGSACLTVVDANVATECPYITGTGLTDAICAGYNAKCTVNRAGTACQKKEALCATYAAVQATCSQSDAGLCAWSGSACLTVVDANVATECPYITGTGLTNAICAGYNAKCTVNRAGTACQKKEALCATYAAVQATCSQSDAGLCAWSGSACLTVVDANVATECAYITGTGLTDAICAGYNAKCTNLKDGTGCQDEKATCKLYTTQNKCTSQTTGPLSCLWFDNSCSPITDVTCSAIVQSGLDHAQCQAYSTGCTSVSDGSKCQDFKTTCEQYAGTALSCTKTATSKCYLQGSNCITISNVATDCAKITGSAGTITYEICQSYNTGCSVNRARSACVQQQAQCSGYTSAMTSCYKSGAGLCIASTNTDTACVAATAATTCDAVYLGTGNYSSANCNEMKAGCTNNGATACVAKTCANAVVIFNHTNCNGYLNTCTVNSGNSACQTMASKCADQTQASCLYSVEGECVVVGTSCVRKTCDTAATDATRDDDTECSAYQQSCTVARLGACQARAACASYKSSLQCKFNTSGGRCFWNPTNKTCVDLNCGNIEASTLYDTHNECVVVDATLACTVRATNGAAVQGCMARGACSSYTIEEQCKTNASNGVCVWNTNANLPAPACQDKSCTSAPTSTTTHNDCYAYYNTATVKCTVVATPSNSGGNPTLGGCQQTAACSSYIDKEQCQINANGEPCGWNGTQCADKSCATAPATADYDDDTKCRAYITNKCTVSDSGQGCVEIPATCETMTQKQCYYNKAGDPCYWTGTACITKSCDNAPDATATADECNTYLAGCTLDNVKCKTKVCEDFAFATDALCKQAISTCTTNGTNCVTRGTCFQALSQAGCVTSSTNQQCEWIPAVLNASNVITSPAYCTIKNCSTAPITLTSEAACAGYFTNCTTKNGGGCVTKSTCSAVTIDVACTTALNGTVCAWDSAQNKCRDKDCQDFSGTTHAACQAQRAGCTAGASGKCARVQNCEQTSVRAACIEGTNGPCLWIDKYQNTDGTKGACFRYTSCKSLNWNNDSSCKWISNKCTTNGSNCVGITLCSETNTDGGCVTGYDGACIQSVPALNSSDPKVCKPYTSCADAFYTTHSDCQIASSKCTTNGTTGCIALGSCSSYTAQAGCYFNDKGTLYTSGVITSTGICTWDTTSSSCRDQSCADLTGTTHATCSSQLSTCTSDGTTCLLKGACTSYTTQTACTTAVGSDGACYWELASATNNNTAKCRLLTCADIQNGTATNVCSVALSTCVSNGTACIPKANCSTYTSKIACNSGGLDGICVFTQSTATGAAAGTGTCALMTACTVANNDQTACQAARDRCSWTAASGTGATAVASKCATHTCATNQATNGACTRFLNWDKKTQQVCTLVSGACTATDPSTLSSNDCFLVSGYTYTWNASTSKCGVCTAVVVQPNTTDNNTNTTDNNTTTDSGYILGLSIVLGYLMF.

A signal peptide spans 1–20 (MNNKFIIFSLLLALVASQTY). PSA repeat units follow at residues 112–165 (TLDS…NTCD), 172–231 (ATDK…RICD), 238–297 (TTDD…KTCA), 304–360 (TTNS…KTCA), 400–460 (TTND…DKTC), 468–523 (TTHD…KKQC), 530–590 (TTTH…KACS), 596–667 (FTTT…KSCA), 683–742 (FTFS…KTCA), 747–806 (TSHA…ATCA), 815–881 (DSDT…YALS), 929–994 (LTFA…AAEC), 1003–1061 (LDHS…FANC), 1069–1123 (LTNT…ACLT), 1141–1196 (LTNA…ACLT), 1214–1269 (LTNA…ACLT), 1287–1342 (LTDA…ACLT), 1360–1415 (LTNA…ACLT), 1433–1495 (LTDA…DVTC), 1503–1566 (LDHA…ATDC), 1576–1641 (ITYE…ATTC), 1684–1740 (NHTN…KTCD), 1750–1807 (DDTE…DLNC), 1817–1887 (DTHN…KSCT), 1893–1965 (TTTH…KSCA), 1974–2033 (DDDT…KSCD), 2070–2137 (ATDA…IKNC), 2145–2204 (TSEA…KDCQ), 2209–2274 (TTHA…YTSC), 2348–2419 (YTTH…QSCA), and 2424–2489 (TTHA…LTCA).

Its subcellular location is the cell membrane. In terms of biological role, this protein is the surface antigen or immobilization antigen of Paramecium primaurelia. The sequence is that of G surface protein, allelic form 168 (168G) from Paramecium primaurelia.